The following is a 247-amino-acid chain: 6-carboxyhexanoate--CoA ligase (247 aa).

The protein belongs to the BioW family. As to quaternary structure, homodimer. It depends on Mg(2+) as a cofactor.

The catalysed reaction is heptanedioate + ATP + CoA = 6-carboxyhexanoyl-CoA + AMP + diphosphate. It participates in metabolic intermediate metabolism; pimeloyl-CoA biosynthesis; pimeloyl-CoA from pimelate: step 1/1. Functionally, catalyzes the transformation of pimelate into pimeloyl-CoA with concomitant hydrolysis of ATP to AMP. This is 6-carboxyhexanoate--CoA ligase from Persephonella marina (strain DSM 14350 / EX-H1).